Consider the following 219-residue polypeptide: tRNA (guanine-N(7)-)-methyltransferase (219 aa).

Residues glutamate 46, glutamate 71, aspartate 100, and aspartate 122 each contribute to the S-adenosyl-L-methionine site. The active site involves aspartate 122. Lysine 126 serves as a coordination point for substrate. Residues 128–133 (KHEKRR) are interaction with RNA. Residues aspartate 158 and 199–202 (TEYE) contribute to the substrate site.

Belongs to the class I-like SAM-binding methyltransferase superfamily. TrmB family.

The enzyme catalyses guanosine(46) in tRNA + S-adenosyl-L-methionine = N(7)-methylguanosine(46) in tRNA + S-adenosyl-L-homocysteine. The protein operates within tRNA modification; N(7)-methylguanine-tRNA biosynthesis. Its function is as follows. Catalyzes the formation of N(7)-methylguanine at position 46 (m7G46) in tRNA. In Oenococcus oeni (strain ATCC BAA-331 / PSU-1), this protein is tRNA (guanine-N(7)-)-methyltransferase.